Reading from the N-terminus, the 973-residue chain is DNA repair protein rhp26 (973 aa).

A coiled-coil region spans residues 35-107 (ESREIEKKRL…DIKRRLNNED (73 aa)). Positions 230–251 (RDQASASENNKDRGEFEGKDEW) are disordered. Over residues 238–251 (NNKDRGEFEGKDEW) the composition is skewed to basic and acidic residues. The 202-residue stretch at 289–490 (WELYCQEAGG…WNLFDFVFPG (202 aa)) folds into the Helicase ATP-binding domain. 302-309 (DEMGLGKT) lines the ATP pocket. The disordered stretch occupies residues 367 to 386 (SREKRQYESDASESEAEESK). Positions 441–444 (DEGH) match the DEAH box motif. In terms of domain architecture, Helicase C-terminal spans 629 to 789 (VIRALLTLWK…RRFFKMTDLH (161 aa)). Disordered stretches follow at residues 803-846 (ETGS…KGKK), 863-882 (KYKPPQESNVTKTNSDSTLG), and 930-973 (AVSS…KQRR). Over residues 834–846 (DRKKHKIHDKGKK) the composition is skewed to basic residues. Polar residues-rich tracts occupy residues 868 to 882 (QESNVTKTNSDSTLG) and 947 to 965 (STNVPGTSKPSGPITSSTL).

Its subcellular location is the cytoplasm. It is found in the nucleus. Its function is as follows. Involved in transcription-coupled repair (TCR). This Schizosaccharomyces pombe (strain 972 / ATCC 24843) (Fission yeast) protein is DNA repair protein rhp26 (rhp26).